Consider the following 807-residue polypeptide: Potassium transporter 9 (807 aa).

The Cytoplasmic segment spans residues 1–59 (MAERVEASSVPEGENTIEEREVGAMWELEQKLDQPMDEEANKLNNMYREKGLSMLMLLR). Residues 60–80 (LSFQSLGIVYGDLGTSPLYVF) form a helical membrane-spanning segment. The Extracellular portion of the chain corresponds to 81–96 (YNTFPDGIDDSEDVIG). Residues 97–117 (ALSLIIYSLLLIPLIKYVFIV) traverse the membrane as a helical segment. At 118–185 (CKANDNGQGG…EGKEWRKRAL (68 aa)) the chain is on the cytoplasmic side. The helical transmembrane segment at 186–206 (LVVVLLGTCMMIGDGILTPAI) threads the bilayer. At 207–225 (SVLSATGGIKVNNPKMSGD) the chain is on the extracellular side. Residues 226 to 246 (IVVLVAIVILIGLFSMQHYGT) traverse the membrane as a helical segment. Residues 247–248 (DK) lie on the Cytoplasmic side of the membrane. A helical membrane pass occupies residues 249–269 (VGWLFAPIVLIWFLFIGATGM). The Extracellular portion of the chain corresponds to 270–299 (YNICKYDTSVLKAFSPTYIYLYFKRRGRDG). A helical transmembrane segment spans residues 300-320 (WISLGGILLSITGTEALYADI). The Cytoplasmic segment spans residues 321–322 (AY). Residues 323–343 (FPLLAIQLAFTFFVFPCLLLA) form a helical membrane-spanning segment. Residues 344 to 369 (YCGQAAYLVIHKEHYQDAFYASIPDS) lie on the Extracellular side of the membrane. A helical membrane pass occupies residues 370–390 (VYWPMFIVATGAAIVGSQATI). Residues 391–417 (SGTYSIVKQAVAHGCFPRVKIVHTSKK) lie on the Cytoplasmic side of the membrane. Residues 418–438 (FLGQIYCPDINWILMLGCIAV) form a helical membrane-spanning segment. Topologically, residues 439–454 (TASFKKQSQIGNAYGT) are extracellular. A helical membrane pass occupies residues 455-475 (AVVLVMLVTTLLMVLIMLLVW). At 476 to 481 (HCHWIL) the chain is on the cytoplasmic side. A helical membrane pass occupies residues 482 to 502 (VLIFTFLSFFVELSYFSAVIF). The Extracellular portion of the chain corresponds to 503–507 (KIDEG). Residues 508–528 (GWVPLIIAAISLLVMSVWHYA) form a helical membrane-spanning segment. Topologically, residues 529–807 (TVKKYEFEMH…LLNVGQVFYV (279 aa)) are cytoplasmic.

Belongs to the HAK/KUP transporter (TC 2.A.72.3) family.

It localises to the cell membrane. Its function is as follows. Putative potassium transporter. This is Potassium transporter 9 (POT9) from Arabidopsis thaliana (Mouse-ear cress).